Consider the following 299-residue polypeptide: 4-hydroxy-tetrahydrodipicolinate synthase (299 aa).

Position 50 (threonine 50) interacts with pyruvate. Tyrosine 139 functions as the Proton donor/acceptor in the catalytic mechanism. The Schiff-base intermediate with substrate role is filled by lysine 167. Valine 209 lines the pyruvate pocket.

It belongs to the DapA family. As to quaternary structure, homotetramer; dimer of dimers.

It localises to the cytoplasm. The catalysed reaction is L-aspartate 4-semialdehyde + pyruvate = (2S,4S)-4-hydroxy-2,3,4,5-tetrahydrodipicolinate + H2O + H(+). The protein operates within amino-acid biosynthesis; L-lysine biosynthesis via DAP pathway; (S)-tetrahydrodipicolinate from L-aspartate: step 3/4. Functionally, catalyzes the condensation of (S)-aspartate-beta-semialdehyde [(S)-ASA] and pyruvate to 4-hydroxy-tetrahydrodipicolinate (HTPA). The sequence is that of 4-hydroxy-tetrahydrodipicolinate synthase from Synechococcus elongatus (strain ATCC 33912 / PCC 7942 / FACHB-805) (Anacystis nidulans R2).